Here is a 222-residue protein sequence, read N- to C-terminus: Sugar fermentation stimulation protein homolog (222 aa).

This sequence belongs to the SfsA family.

This Thermotoga petrophila (strain ATCC BAA-488 / DSM 13995 / JCM 10881 / RKU-1) protein is Sugar fermentation stimulation protein homolog.